Consider the following 553-residue polypeptide: RNA N(6)-adenosine-methyltransferase METTL16 (553 aa).

Positions 17–20 are RNA-binding; sequence PPDF. S-adenosyl-L-methionine is bound by residues Arg-82, Gly-110, Ser-114, Glu-133, Thr-164, and Asn-184. A K-loop region spans residues 163 to 167; it reads KTLLM. RNA-binding stretches follow at residues 199 to 211, 250 to 254, and 277 to 283; these read SRNS…SSVN, GKKCS, and QGRTMRW. Residues 289–400 form a VCR 1 region; the sequence is FYDDVTVPSP…QLREVPRAPE (112 aa). Ser-329, Ser-425, and Ser-429 each carry phosphoserine. The tract at residues 457-496 is disordered; that stretch reads EETPEATEDERDEERGGMEAMESCKGSSNGAQDGEASEKG. The segment covering 458-468 has biased composition (acidic residues); that stretch reads ETPEATEDERD. Residue Thr-463 is modified to Phosphothreonine. The tract at residues 506-553 is VCR 2; it reads YLFKCLVNIKKEAGDAVVEMHWVEGQNRDLMNQLCTYVRNQILRLVAS.

Belongs to the methyltransferase superfamily. METTL16/RlmF family. In terms of assembly, interacts with MEPCE. Interacts with LARP7.

It is found in the nucleus. The protein resides in the cytoplasm. It carries out the reaction adenosine in U6 snRNA + S-adenosyl-L-methionine = N(6)-methyladenosine in U6 snRNA + S-adenosyl-L-homocysteine + H(+). The catalysed reaction is an adenosine in mRNA + S-adenosyl-L-methionine = an N(6)-methyladenosine in mRNA + S-adenosyl-L-homocysteine + H(+). Methyltransferase activity is autoinhibited by the K-loop region that blocks S-adenosyl-L-methionine-binding. Upon activation, K-loop changes conformation, allowing S-adenosyl-L-methionine-binding and subsequent methyltransferase activity. mRNA N6-adenosine-methyltransferase activity is inhibited by zinc. Functionally, RNA N6-methyltransferase that methylates adenosine residues at the N(6) position of a subset of RNAs and is involved in S-adenosyl-L-methionine homeostasis by regulating expression of MAT2A transcripts. Able to N6-methylate a subset of mRNAs and U6 small nuclear RNAs (U6 snRNAs). In contrast to the METTL3-METTL14 heterodimer, only able to methylate a limited number of RNAs: requires both a 5'UACAGAGAA-3' nonamer sequence and a specific RNA structure. Plays a key role in S-adenosyl-L-methionine homeostasis by mediating N6-methylation of MAT2A mRNAs, altering splicing of MAT2A transcripts: in presence of S-adenosyl-L-methionine, binds the 3'-UTR region of MAT2A mRNA and specifically N6-methylates the first hairpin of MAT2A mRNA, preventing recognition of their 3'-splice site by U2AF1/U2AF35, thereby inhibiting splicing and protein production of S-adenosylmethionine synthase. In S-adenosyl-L-methionine-limiting conditions, binds the 3'-UTR region of MAT2A mRNA but stalls due to the lack of a methyl donor, preventing N6-methylation and promoting expression of MAT2A. In addition to mRNAs, also able to mediate N6-methylation of U6 small nuclear RNA (U6 snRNA): specifically N6-methylates adenine in position 43 of U6 snRNAs. Also able to bind various lncRNAs, such as 7SK snRNA (7SK RNA) or 7SL RNA. Specifically binds the 3'-end of the MALAT1 long non-coding RNA. The chain is RNA N(6)-adenosine-methyltransferase METTL16 from Mus musculus (Mouse).